A 62-amino-acid polypeptide reads, in one-letter code: Zinc finger-containing protein P28b (62 aa).

The RING-type; degenerate zinc finger occupies 1–46 (MKLFTQNDRYFGLLDSCTHIFCITCINIWHKTRRETGASDNCPICR).

The chain is Zinc finger-containing protein P28b from Vaccinia virus (strain Western Reserve) (VACV).